The following is a 466-amino-acid chain: Cysteine--tRNA ligase (466 aa).

A Zn(2+)-binding site is contributed by cysteine 28. The 'HIGH' region motif lies at proline 30–asparagine 40. Positions 208, 233, and 237 each coordinate Zn(2+). Positions lysine 265–serine 269 match the 'KMSKS' region motif. Residue lysine 268 coordinates ATP.

The protein belongs to the class-I aminoacyl-tRNA synthetase family. In terms of assembly, monomer. It depends on Zn(2+) as a cofactor.

Its subcellular location is the cytoplasm. It catalyses the reaction tRNA(Cys) + L-cysteine + ATP = L-cysteinyl-tRNA(Cys) + AMP + diphosphate. The protein is Cysteine--tRNA ligase of Clostridium perfringens (strain SM101 / Type A).